The following is a 186-amino-acid chain: Allergen Fel d 4 (186 aa).

The first 15 residues, 1 to 15 (MKLLLLCLGLILVCA), serve as a signal peptide directing secretion. N-linked (GlcNAc...) asparagine glycosylation is found at Asn51 and Asn66. Residues Cys81 and Cys171 are joined by a disulfide bond.

Belongs to the calycin superfamily. Lipocalin family. In terms of tissue distribution, abundant in urine (at protein level).

Its subcellular location is the secreted. May be a pheromone carrier. Acts as a kairomone, detected by the prey vomeronasal organ and inducing fear reactions in mice. This is Allergen Fel d 4 from Felis catus (Cat).